The chain runs to 86 residues: Small ribosomal subunit protein uS17 (86 aa).

Belongs to the universal ribosomal protein uS17 family. Part of the 30S ribosomal subunit.

Functionally, one of the primary rRNA binding proteins, it binds specifically to the 5'-end of 16S ribosomal RNA. The protein is Small ribosomal subunit protein uS17 of Desulfitobacterium hafniense (strain DSM 10664 / DCB-2).